The following is a 628-amino-acid chain: 69 kDa protein (628 aa).

Disordered regions lie at residues 1 to 25 (MSNG…SAPN), 141 to 332 (HFHA…FRPS), 347 to 398 (GHLE…HRRS), 418 to 507 (RGKI…RRTF), and 535 to 628 (QTVL…PDTD). The segment covering 299–312 (PPTTTSRPTGPPSR) has biased composition (low complexity). Positions 320–331 (YQSSPHTPNFRP) are enriched in polar residues. A compositionally biased stretch (pro residues) spans 434–450 (GAPPPPRRLPSPAPHPQ). The segment covering 497–507 (TEVHAPERRTF) has biased composition (basic and acidic residues).

It belongs to the tymoviridae protein p69 family.

In terms of biological role, acts as a suppressor of RNA-mediated gene silencing, also known as post-transcriptional gene silencing (PTGS), a mechanism of plant viral defense that limits the accumulation of viral RNAs. The sequence is that of 69 kDa protein from Brassica.